The primary structure comprises 137 residues: Putative pre-16S rRNA nuclease (137 aa).

Belongs to the YqgF nuclease family.

It is found in the cytoplasm. In terms of biological role, could be a nuclease involved in processing of the 5'-end of pre-16S rRNA. The polypeptide is Putative pre-16S rRNA nuclease (Anaeromyxobacter dehalogenans (strain 2CP-C)).